We begin with the raw amino-acid sequence, 213 residues long: ATP phosphoribosyltransferase (213 aa).

It belongs to the ATP phosphoribosyltransferase family. Short subfamily. As to quaternary structure, heteromultimer composed of HisG and HisZ subunits.

The protein resides in the cytoplasm. It carries out the reaction 1-(5-phospho-beta-D-ribosyl)-ATP + diphosphate = 5-phospho-alpha-D-ribose 1-diphosphate + ATP. It functions in the pathway amino-acid biosynthesis; L-histidine biosynthesis; L-histidine from 5-phospho-alpha-D-ribose 1-diphosphate: step 1/9. Its function is as follows. Catalyzes the condensation of ATP and 5-phosphoribose 1-diphosphate to form N'-(5'-phosphoribosyl)-ATP (PR-ATP). Has a crucial role in the pathway because the rate of histidine biosynthesis seems to be controlled primarily by regulation of HisG enzymatic activity. This is ATP phosphoribosyltransferase from Bacillus licheniformis (strain ATCC 14580 / DSM 13 / JCM 2505 / CCUG 7422 / NBRC 12200 / NCIMB 9375 / NCTC 10341 / NRRL NRS-1264 / Gibson 46).